We begin with the raw amino-acid sequence, 674 residues long: Probable nucleolar GTP-binding protein 1 (674 aa).

The 178-residue stretch at 169 to 346 (RTLLLTGYPN…VKDTACSILF (178 aa)) folds into the OBG-type G domain. GTP-binding positions include 175–182 (GYPNVGKS), 221–225 (DTPGI), and 289–292 (NKID). Residues 518 to 527 (RINHQIKDSS) are compositionally biased toward basic and acidic residues. 2 disordered regions span residues 518 to 538 (RINH…RRGI) and 564 to 674 (VRDH…NDFR). Residues 570–580 (SRISGKKRSRS) are compositionally biased toward basic residues. 2 stretches are compositionally biased toward basic and acidic residues: residues 619 to 633 (GFHD…DKLD) and 641 to 653 (NQDG…DRHV).

This sequence belongs to the TRAFAC class OBG-HflX-like GTPase superfamily. OBG GTPase family. NOG subfamily.

The protein localises to the nucleus. The protein resides in the nucleolus. In terms of biological role, involved in the biogenesis of the 60S ribosomal subunit. This Dictyostelium discoideum (Social amoeba) protein is Probable nucleolar GTP-binding protein 1 (nog1).